We begin with the raw amino-acid sequence, 238 residues long: Probable transcriptional regulatory protein YeeN (238 aa).

This sequence belongs to the TACO1 family. YeeN subfamily.

The protein resides in the cytoplasm. This is Probable transcriptional regulatory protein YeeN from Salmonella typhimurium (strain LT2 / SGSC1412 / ATCC 700720).